Here is a 440-residue protein sequence, read N- to C-terminus: Proton extrusion protein PxcA (440 aa).

Transmembrane regions (helical) follow at residues 222 to 242 (FVLTLIIVPLLAHQLTKTFFL), 316 to 336 (NAIANIFADIFSLVAFSLVLV), 352 to 374 (IVYGLSDSAKAFLIILFTDMFVG), and 400 to 420 (FNFLFIATFPVILDTVFKYWI).

It belongs to the CemA family.

The protein localises to the cell inner membrane. Required for H(+) efflux immediately after light irradiation to form a rapid H(+) concentration gradient across the thylakoid membranes. Together with PxcL, contributes to transient H(+) uptake following dark to light transition. Involved in light-induced Na(+)-dependent proton extrusion. Also seems to be involved in CO(2) transport. The polypeptide is Proton extrusion protein PxcA (Synechocystis sp. (strain ATCC 27184 / PCC 6803 / Kazusa)).